The sequence spans 477 residues: 3-isopropylmalate dehydratase large subunit (477 aa).

[4Fe-4S] cluster contacts are provided by Cys352, Cys413, and Cys416.

The protein belongs to the aconitase/IPM isomerase family. LeuC type 1 subfamily. Heterodimer of LeuC and LeuD. [4Fe-4S] cluster is required as a cofactor.

The enzyme catalyses (2R,3S)-3-isopropylmalate = (2S)-2-isopropylmalate. It functions in the pathway amino-acid biosynthesis; L-leucine biosynthesis; L-leucine from 3-methyl-2-oxobutanoate: step 2/4. Its function is as follows. Catalyzes the isomerization between 2-isopropylmalate and 3-isopropylmalate, via the formation of 2-isopropylmaleate. The protein is 3-isopropylmalate dehydratase large subunit of Pseudomonas putida (strain W619).